The chain runs to 377 residues: DNA replication and repair protein RecF (377 aa).

Residue 30-37 (GQNAQGKS) participates in ATP binding.

Belongs to the RecF family.

It is found in the cytoplasm. In terms of biological role, the RecF protein is involved in DNA metabolism; it is required for DNA replication and normal SOS inducibility. RecF binds preferentially to single-stranded, linear DNA. It also seems to bind ATP. In Cyanothece sp. (strain PCC 7425 / ATCC 29141), this protein is DNA replication and repair protein RecF.